The following is a 330-amino-acid chain: Flotillin-like protein FloA (330 aa).

2 consecutive transmembrane segments (helical) span residues Ile-5–Phe-25 and Val-28–Gly-48.

The protein belongs to the flotillin-like FloA family. In terms of assembly, homooligomerizes.

Its subcellular location is the cell membrane. It is found in the membrane raft. Found in functional membrane microdomains (FMM) that may be equivalent to eukaryotic membrane rafts. FMMs are highly dynamic and increase in number as cells age. Flotillins are thought to be important factors in membrane fluidity. This Oceanobacillus iheyensis (strain DSM 14371 / CIP 107618 / JCM 11309 / KCTC 3954 / HTE831) protein is Flotillin-like protein FloA.